Consider the following 47-residue polypeptide: Heat shock protein HSP 90 (47 aa).

This sequence belongs to the heat shock protein 90 family. Homodimer.

The protein localises to the cytoplasm. Functionally, putative molecular chaperone that may promote the maturation, structural maintenance and proper regulation of specific target proteins. This Oryctolagus cuniculus (Rabbit) protein is Heat shock protein HSP 90.